The chain runs to 179 residues: Pyridoxal 5'-phosphate synthase subunit PdxT (179 aa).

Residue 48 to 50 (GES) participates in L-glutamine binding. The active-site Nucleophile is the cysteine 79. Residues arginine 101 and 127–128 (IR) each bind L-glutamine. Catalysis depends on charge relay system residues histidine 163 and glutamate 165.

Belongs to the glutaminase PdxT/SNO family. In the presence of PdxS, forms a dodecamer of heterodimers. Only shows activity in the heterodimer.

The enzyme catalyses aldehydo-D-ribose 5-phosphate + D-glyceraldehyde 3-phosphate + L-glutamine = pyridoxal 5'-phosphate + L-glutamate + phosphate + 3 H2O + H(+). The catalysed reaction is L-glutamine + H2O = L-glutamate + NH4(+). It functions in the pathway cofactor biosynthesis; pyridoxal 5'-phosphate biosynthesis. Functionally, catalyzes the hydrolysis of glutamine to glutamate and ammonia as part of the biosynthesis of pyridoxal 5'-phosphate. The resulting ammonia molecule is channeled to the active site of PdxS. This is Pyridoxal 5'-phosphate synthase subunit PdxT from Francisella philomiragia subsp. philomiragia (strain ATCC 25017 / CCUG 19701 / FSC 153 / O#319-036).